The following is a 362-amino-acid chain: Cytochrome c peroxidase, mitochondrial (362 aa).

The transit peptide at M1–Y40 directs the protein to the mitochondrion. The Proton acceptor role is filled by H121. Heme b is bound at residue H244. The Tryptophan radical intermediate role is filled by W260.

The protein belongs to the peroxidase family. Cytochrome c peroxidase subfamily. Forms a one-to-one complex with cytochrome c. Heme b serves as cofactor.

Its subcellular location is the mitochondrion matrix. The protein resides in the mitochondrion intermembrane space. It catalyses the reaction 2 Fe(II)-[cytochrome c] + H2O2 + 2 H(+) = 2 Fe(III)-[cytochrome c] + 2 H2O. In terms of biological role, destroys radicals which are normally produced within the cells and which are toxic to biological systems. The chain is Cytochrome c peroxidase, mitochondrial (CCP1) from Pyricularia oryzae (strain 70-15 / ATCC MYA-4617 / FGSC 8958) (Rice blast fungus).